Consider the following 840-residue polypeptide: Phosphatidylglycerol lysyltransferase (840 aa).

At Met1 to Lys8 the chain is on the cytoplasmic side. The chain crosses the membrane as a helical span at residues Leu9 to Leu29. At Tyr30–Trp52 the chain is on the extracellular side. Residues Leu53–Ile73 form a helical membrane-spanning segment. The Cytoplasmic segment spans residues Leu74 to Arg89. The chain crosses the membrane as a helical span at residues Val90–Gly110. The Extracellular portion of the chain corresponds to Val111–Tyr129. A helical transmembrane segment spans residues Ile130–Leu150. The Cytoplasmic portion of the chain corresponds to Arg151 to Glu161. A helical transmembrane segment spans residues Ile162–Tyr182. Residues Thr183–Thr200 are Extracellular-facing. A helical transmembrane segment spans residues Val201–Val221. Residues Asp222–Thr229 lie on the Cytoplasmic side of the membrane. A helical transmembrane segment spans residues Phe230 to Phe250. Residues Gly251–Lys270 lie on the Extracellular side of the membrane. The chain crosses the membrane as a helical span at residues Ile271–Leu291. Over Ile292–Ser337 the chain is Cytoplasmic. A helical transmembrane segment spans residues Leu338–Tyr358. Residues Asp359–His366 lie on the Extracellular side of the membrane. Residues Phe367–Val387 form a helical membrane-spanning segment. The Cytoplasmic portion of the chain corresponds to Arg388–Lys392. The chain crosses the membrane as a helical span at residues Gly393 to Ile413. Residues Tyr414–Thr415 lie on the Extracellular side of the membrane. A helical membrane pass occupies residues Tyr416–Tyr436. Over Gln437–Lys450 the chain is Cytoplasmic. A helical transmembrane segment spans residues Leu451 to Gly471. Topologically, residues Thr472 to Arg489 are extracellular. The helical transmembrane segment at Tyr490–Phe510 threads the bilayer. Residues Asp511–Lys840 are Cytoplasmic-facing.

It belongs to the LPG synthase family.

It is found in the cell membrane. The catalysed reaction is L-lysyl-tRNA(Lys) + a 1,2-diacyl-sn-glycero-3-phospho-(1'-sn-glycerol) = a 1,2-diacyl-sn-glycero-3-phospho-1'-(3'-O-L-lysyl)-sn-glycerol + tRNA(Lys). Functionally, catalyzes the transfer of a lysyl group from L-lysyl-tRNA(Lys) to membrane-bound phosphatidylglycerol (PG), which produces lysylphosphatidylglycerol (LPG), a major component of the bacterial membrane with a positive net charge. LPG synthesis contributes to bacterial virulence as it is involved in the resistance mechanism against cationic antimicrobial peptides (CAMP) produces by the host's immune system (defensins, cathelicidins) and by the competing microorganisms (bacteriocins). In fact, the modification of anionic phosphatidylglycerol with positively charged L-lysine results in repulsion of the peptides. This is Phosphatidylglycerol lysyltransferase (mprF) from Staphylococcus epidermidis (strain ATCC 12228 / FDA PCI 1200).